Here is a 209-residue protein sequence, read N- to C-terminus: Large ribosomal subunit protein uL3 (209 aa).

The segment at 127-151 (SGGPSSHGSKFHRHLGGTGQATTPA) is disordered.

This sequence belongs to the universal ribosomal protein uL3 family. In terms of assembly, part of the 50S ribosomal subunit. Forms a cluster with proteins L14 and L19.

One of the primary rRNA binding proteins, it binds directly near the 3'-end of the 23S rRNA, where it nucleates assembly of the 50S subunit. The protein is Large ribosomal subunit protein uL3 of Borrelia duttonii (strain Ly).